Consider the following 207-residue polypeptide: ATP-dependent Clp protease proteolytic subunit (207 aa).

The active-site Nucleophile is the serine 112. The active site involves histidine 137.

Belongs to the peptidase S14 family. Fourteen ClpP subunits assemble into 2 heptameric rings which stack back to back to give a disk-like structure with a central cavity, resembling the structure of eukaryotic proteasomes.

The protein resides in the cytoplasm. The catalysed reaction is Hydrolysis of proteins to small peptides in the presence of ATP and magnesium. alpha-casein is the usual test substrate. In the absence of ATP, only oligopeptides shorter than five residues are hydrolyzed (such as succinyl-Leu-Tyr-|-NHMec, and Leu-Tyr-Leu-|-Tyr-Trp, in which cleavage of the -Tyr-|-Leu- and -Tyr-|-Trp bonds also occurs).. Functionally, cleaves peptides in various proteins in a process that requires ATP hydrolysis. Has a chymotrypsin-like activity. Plays a major role in the degradation of misfolded proteins. This Bacteroides fragilis (strain ATCC 25285 / DSM 2151 / CCUG 4856 / JCM 11019 / LMG 10263 / NCTC 9343 / Onslow / VPI 2553 / EN-2) protein is ATP-dependent Clp protease proteolytic subunit.